We begin with the raw amino-acid sequence, 177 residues long: Large ribosomal subunit protein uL6 (177 aa).

It belongs to the universal ribosomal protein uL6 family. Part of the 50S ribosomal subunit.

In terms of biological role, this protein binds to the 23S rRNA, and is important in its secondary structure. It is located near the subunit interface in the base of the L7/L12 stalk, and near the tRNA binding site of the peptidyltransferase center. The chain is Large ribosomal subunit protein uL6 from Psychromonas ingrahamii (strain DSM 17664 / CCUG 51855 / 37).